Reading from the N-terminus, the 315-residue chain is Protein sprouty homolog 2 (315 aa).

The segment covering 1-14 has biased composition (polar residues); that stretch reads MEARAQSGSGSQPL. Disordered regions lie at residues 1-38 and 51-140; these read MEARAQSGSGSQPLLQAPRDSGRQRGEPDPRDALPQQV and NTNE…GSSF. The span at 20–32 shows a compositional bias: basic and acidic residues; sequence DSGRQRGEPDPRD. Positions 88–100 are enriched in pro residues; the sequence is PRQPSRPQHPPAH. Over residues 109–140 the composition is skewed to low complexity; that stretch reads RSISTVSSGSRSSTRTSTSSSSSEQRLLGSSF. A required for interaction with CAV1 region spans residues 118–315; that stretch reads SRSSTRTSTS…VPPRNFEKPT (198 aa). An SPR domain is found at 177-291; that stretch reads KCEDCGKCKC…CYDRVNRPGC (115 aa). The tract at residues 178–315 is required for interaction with TESK1; the sequence is CEDCGKCKCK…VPPRNFEKPT (138 aa).

The protein belongs to the sprouty family. Forms heterodimers with SPRY1. Forms a tripartite complex containing GAB1, METTL13 and SPRY2. Within the complex interacts with METTL13. Interacts with RAF1. Interacts (via C-terminus) with TESK1 (via C-terminus); the interaction disrupts SPRY2 interaction with GRB2, potentially via disruption of SPRY2 serine dephosphorylation. Interacts with PPP2R1A/PP2A-A and PPP2CA/PP2A-C; the interaction with PPP2CA/PP2A-C is inhibited by interaction with TESK1, possibly by vesicular sequestration of SPRY2. Inhibition of the interaction with the serine/threonine-protein phosphatase 2A (PP2A) holoenzyme results in loss of PP2A-mediated dephosphorylation, resulting in the loss of SPRY2 interaction with GRB2. Interacts with GRB2. Interacts with CBL/C-CBL; the interaction inhibits CBL-mediated ubiquitination of EGFR. Interacts (via C-terminus) with CAV1 (via C-terminus). Cleaved at Pro-144 by the prolyl endopeptidase FAP (seprase) activity (in vitro).

It localises to the cytoplasm. Its subcellular location is the cytoskeleton. The protein localises to the cell projection. The protein resides in the ruffle membrane. Functionally, antagonist of fibroblast growth factor (FGF) pathways via inhibition of FGF-mediated phosphorylation of ERK1/2. Thereby acts as an antagonist of FGF-induced retinal lens fiber differentiation, may inhibit limb bud outgrowth and may negatively modulate respiratory organogenesis. Inhibits TGFB-induced epithelial-to-mesenchymal transition in retinal lens epithelial cells. Inhibits CBL/C-CBL-mediated EGFR ubiquitination. This is Protein sprouty homolog 2 (SPRY2) from Bos taurus (Bovine).